Reading from the N-terminus, the 323-residue chain is Putative dTDP-D-glucose 4,6-dehydratase (323 aa).

Threonine 124 is a substrate binding site. Aspartate 125 functions as the Proton donor in the catalytic mechanism. Residues glutamate 126 and tyrosine 149 each act as proton acceptor in the active site.

The protein belongs to the NAD(P)-dependent epimerase/dehydratase family. dTDP-glucose dehydratase subfamily. The cofactor is NAD(+).

The catalysed reaction is dTDP-alpha-D-glucose = dTDP-4-dehydro-6-deoxy-alpha-D-glucose + H2O. The sequence is that of Putative dTDP-D-glucose 4,6-dehydratase from Acanthamoeba polyphaga mimivirus (APMV).